A 157-amino-acid chain; its full sequence is Small ribosomal subunit protein uS7 (157 aa).

This sequence belongs to the universal ribosomal protein uS7 family. Part of the 30S ribosomal subunit. Contacts proteins S9 and S11.

Its function is as follows. One of the primary rRNA binding proteins, it binds directly to 16S rRNA where it nucleates assembly of the head domain of the 30S subunit. Is located at the subunit interface close to the decoding center, probably blocks exit of the E-site tRNA. The protein is Small ribosomal subunit protein uS7 of Chlamydia trachomatis serovar L2 (strain ATCC VR-902B / DSM 19102 / 434/Bu).